Here is a 552-residue protein sequence, read N- to C-terminus: Hydroxylamine reductase (552 aa).

C3, C6, C15, and C21 together coordinate [4Fe-4S] cluster. Hybrid [4Fe-2O-2S] cluster-binding residues include H247, E271, C315, C407, C435, C460, E495, and K497. A Cysteine persulfide modification is found at C407.

The protein belongs to the HCP family. It depends on [4Fe-4S] cluster as a cofactor. Hybrid [4Fe-2O-2S] cluster is required as a cofactor.

The protein resides in the cytoplasm. It catalyses the reaction A + NH4(+) + H2O = hydroxylamine + AH2 + H(+). In terms of biological role, catalyzes the reduction of hydroxylamine to form NH(3) and H(2)O. The chain is Hydroxylamine reductase from Thermosipho melanesiensis (strain DSM 12029 / CIP 104789 / BI429).